Consider the following 168-residue polypeptide: Disulfide bond formation protein B 2 (168 aa).

Residues 1 to 9 are Cytoplasmic-facing; sequence MLPARLRTF. The chain crosses the membrane as a helical span at residues 10-26; that stretch reads FLPACLVALAVLVASFR. At 27-44 the chain is on the periplasmic side; it reads LENTVGLMPCPLCLSQRL. A disulfide bridge links Cys-36 with Cys-39. The helical transmembrane segment at 45–61 threads the bilayer; the sequence is LLGGYALLCFAAVLQAP. The Cytoplasmic portion of the chain corresponds to 62 to 67; it reads GTRGIL. A helical membrane pass occupies residues 68–85; that stretch reads RYARLALGCSLAGALLAA. Residues 86–140 lie on the Periplasmic side of the membrane; it reads RHVWLQGAEGVNEVCPVPIGRVFEQSWSEAARQLLLGGPDCRSLAWSFLDLTLPE. Cys-100 and Cys-126 are joined by a disulfide. A helical membrane pass occupies residues 141–159; it reads WSLLAFLLLAVLPLSCLLA. Residues 160-168 lie on the Cytoplasmic side of the membrane; it reads YRFRTLART.

It belongs to the DsbB family.

It is found in the cell inner membrane. Required for disulfide bond formation in some periplasmic proteins. Acts by oxidizing the DsbA protein. This chain is Disulfide bond formation protein B 2 (dsbB2), found in Pseudomonas putida (strain ATCC 47054 / DSM 6125 / CFBP 8728 / NCIMB 11950 / KT2440).